An 858-amino-acid polypeptide reads, in one-letter code: Leucine--tRNA ligase (858 aa).

Positions 42-52 (PYPSGRLHMGH) match the 'HIGH' region motif. The short motif at 618-622 (KMSKS) is the 'KMSKS' region element. K621 provides a ligand contact to ATP.

It belongs to the class-I aminoacyl-tRNA synthetase family.

It is found in the cytoplasm. The catalysed reaction is tRNA(Leu) + L-leucine + ATP = L-leucyl-tRNA(Leu) + AMP + diphosphate. This is Leucine--tRNA ligase from Aeromonas salmonicida (strain A449).